The primary structure comprises 885 residues: Alanine--tRNA ligase (885 aa).

Zn(2+)-binding residues include histidine 569, histidine 573, cysteine 672, and histidine 676.

The protein belongs to the class-II aminoacyl-tRNA synthetase family. Zn(2+) serves as cofactor.

The protein resides in the cytoplasm. It catalyses the reaction tRNA(Ala) + L-alanine + ATP = L-alanyl-tRNA(Ala) + AMP + diphosphate. Functionally, catalyzes the attachment of alanine to tRNA(Ala) in a two-step reaction: alanine is first activated by ATP to form Ala-AMP and then transferred to the acceptor end of tRNA(Ala). Also edits incorrectly charged Ser-tRNA(Ala) and Gly-tRNA(Ala) via its editing domain. This Chlorobaculum tepidum (strain ATCC 49652 / DSM 12025 / NBRC 103806 / TLS) (Chlorobium tepidum) protein is Alanine--tRNA ligase.